Here is a 508-residue protein sequence, read N- to C-terminus: Fc receptor-like protein 2 (508 aa).

The N-terminal stretch at 1-19 is a signal peptide; it reads MLLWSLLVIFDAVTEQADS. 4 consecutive Ig-like C2-type domains span residues 20–98, 109–187, 201–290, and 300–387; these read LTLV…SNIV, PVLT…HRIR, PISN…KVVN, and PVLT…VSIS. The Extracellular portion of the chain corresponds to 20–401; it reads LTLVAPSSVF…YRRDLMTAGV (382 aa). The cysteines at positions 128 and 177 are disulfide-linked. N-linked (GlcNAc...) asparagine glycans are attached at residues asparagine 204, asparagine 234, asparagine 343, asparagine 355, and asparagine 365. Disulfide bonds link cysteine 226/cysteine 275 and cysteine 321/cysteine 368. A helical membrane pass occupies residues 402 to 422; the sequence is LWGLFGVLGFTGVALLLYALF. Topologically, residues 423-508 are cytoplasmic; it reads HKISGESSAT…QVIYSSVKKS (86 aa). Residues 429 to 453 are disordered; the sequence is SSATNEPRGASRPNPQEFTYSSPTP. The segment covering 441–452 has biased composition (polar residues); the sequence is PNPQEFTYSSPT. 4 short sequence motifs (ITIM motif) span residues 446 to 451, 460 to 465, 472 to 477, and 500 to 505; these read FTYSSP, PVYVNV, VVYSQV, and VIYSSV.

The tyrosine-phosphorylated isoform 2 interacts with PTPN6. Post-translationally, isoform 2 is N- and O-glycosylated, and phosphorylated. Expressed in the secondary lymphoid organs, spleen and lymph node. Expression is limited to the mature B-cell lines. Highly expressed in CD19 and within the mantle zones of the tonsil tissue. Isoform 2 is expressed in the spleen, peripheral blood and bone marrow. Isoform 2 and isoform 4 are expressed in B-cell lines. Preferentially expressed in memory B-cells (at protein level).

The protein localises to the cell membrane. Functionally, may have an regulatory role in normal and neoplastic B cell development. This chain is Fc receptor-like protein 2 (FCRL2), found in Homo sapiens (Human).